The primary structure comprises 874 residues: Probable inorganic carbon transporter subunit DabA (874 aa).

Zn(2+)-binding residues include Cys398, Asp400, His580, and Cys595.

The protein belongs to the inorganic carbon transporter (TC 9.A.2) DabA family. As to quaternary structure, forms a complex with DabB. The cofactor is Zn(2+).

It localises to the cell membrane. In terms of biological role, part of an energy-coupled inorganic carbon pump. The protein is Probable inorganic carbon transporter subunit DabA of Bacillus cereus (strain AH187).